The chain runs to 642 residues: Zinc finger protein 14 (642 aa).

In terms of domain architecture, KRAB spans 4-76 (VSFEDVAVNF…MVERLCESRK (73 aa)). The C2H2-type 1 zinc finger occupies 103 to 125 (HECSFCGRDFMHHSSLNRHMRSH). A C2H2-type 2; degenerate zinc finger spans residues 141–163 (RKHKAVEKTFSYHHCFRKHERTH). Residues 169–191 (YECKQCGKAFIYYQPFQRHERTH) form a C2H2-type 3 zinc finger. The segment at 197–217 (YECKQCGKTFIYYQSFQQHAH) adopts a C2H2-type 4; atypical zinc-finger fold. 15 C2H2-type zinc fingers span residues 223-245 (YECK…ERTH), 251-273 (YECK…ERTH), 279-301 (YKCK…KRTH), 307-329 (YECK…VITH), 335-357 (YKCK…ERTH), 363-385 (YECK…ERTH), 391-413 (YECK…ETTH), 419-441 (YECK…ERTH), 447-469 (YECK…ERSH), 475-497 (YECK…ERTH), 503-525 (YECK…EKIH), 531-553 (FECK…ERTH), 559-581 (YQCK…ERTH), 587-609 (YRCK…ERSH), and 615-637 (YECK…ERTH).

It belongs to the krueppel C2H2-type zinc-finger protein family.

The protein localises to the nucleus. In terms of biological role, may be involved in transcriptional regulation. This Pongo abelii (Sumatran orangutan) protein is Zinc finger protein 14 (ZNF14).